The primary structure comprises 94 residues: Cytochrome b-c1 complex subunit 8, mitochondrial (94 aa).

At 2-49 the chain is on the mitochondrial matrix side; the sequence is GPPSGKTYMGWWGHMGGPKQKGITSYAVSPYAQKPLQGIFHNAVFNSF. Residues 50–80 form a helical membrane-spanning segment; that stretch reads RRFKSQFLYVLIPAGIYWYWWKNGNEYNEFL. The Mitochondrial intermembrane segment spans residues 81–94; that stretch reads YSKAGREELERVNV.

The protein belongs to the UQCRQ/QCR8 family. In terms of assembly, component of the ubiquinol-cytochrome c oxidoreductase (cytochrome b-c1 complex, complex III, CIII), a multisubunit enzyme composed of 10 subunits. The complex is composed of 3 respiratory subunits cytochrome b (COB), cytochrome c1 (CYT1) and Rieske protein (RIP1), 2 core protein subunits COR1 and QCR2, and 5 low-molecular weight protein subunits QCR6, QCR7, QCR8, QCR9 and QCR10. The complex exists as an obligatory dimer and forms supercomplexes (SCs) in the inner mitochondrial membrane with a monomer or a dimer of cytochrome c oxidase (complex IV, CIV), resulting in 2 different assemblies (supercomplexes III(2)IV and III(2)IV(2)).

The protein resides in the mitochondrion inner membrane. Functionally, component of the ubiquinol-cytochrome c oxidoreductase, a multisubunit transmembrane complex that is part of the mitochondrial electron transport chain which drives oxidative phosphorylation. The respiratory chain contains 3 multisubunit complexes succinate dehydrogenase (complex II, CII), ubiquinol-cytochrome c oxidoreductase (cytochrome b-c1 complex, complex III, CIII) and cytochrome c oxidase (complex IV, CIV), that cooperate to transfer electrons derived from NADH and succinate to molecular oxygen, creating an electrochemical gradient over the inner membrane that drives transmembrane transport and the ATP synthase. The cytochrome b-c1 complex catalyzes electron transfer from ubiquinol to cytochrome c, linking this redox reaction to translocation of protons across the mitochondrial inner membrane, with protons being carried across the membrane as hydrogens on the quinol. In the process called Q cycle, 2 protons are consumed from the matrix, 4 protons are released into the intermembrane space and 2 electrons are passed to cytochrome c. This chain is Cytochrome b-c1 complex subunit 8, mitochondrial (QCR8), found in Saccharomyces cerevisiae (strain ATCC 204508 / S288c) (Baker's yeast).